A 686-amino-acid chain; its full sequence is Acyl-CoA synthetase short-chain family member 3, mitochondrial (686 aa).

A mitochondrion-targeting transit peptide spans 1-29 (MKPSWLQCRKVTSAGGLGGPLPGSSPARG). 227-230 (EPGR) contributes to the CoA binding site. Residues 425-427 (GER) and 446-451 (DHWWQT) each bind ATP. An N6-succinyllysine modification is found at K518. K524 is subject to N6-acetyllysine. D539, R554, and R565 together coordinate ATP. R624 contributes to the CoA binding site.

This sequence belongs to the ATP-dependent AMP-binding enzyme family.

The protein localises to the mitochondrion matrix. The enzyme catalyses acetate + ATP + CoA = acetyl-CoA + AMP + diphosphate. It catalyses the reaction propanoate + ATP + CoA = propanoyl-CoA + AMP + diphosphate. It carries out the reaction butanoate + ATP + CoA = butanoyl-CoA + AMP + diphosphate. Functionally, catalyzes the synthesis of acetyl-CoA from short-chain fatty acids. Propionate is the preferred substrate. Can utilize acetate and butyrate with a much lower affinity. The polypeptide is Acyl-CoA synthetase short-chain family member 3, mitochondrial (ACSS3) (Homo sapiens (Human)).